The sequence spans 247 residues: Probable 2-phosphosulfolactate phosphatase (247 aa).

This sequence belongs to the ComB family. It depends on Mg(2+) as a cofactor.

The catalysed reaction is (2R)-O-phospho-3-sulfolactate + H2O = (2R)-3-sulfolactate + phosphate. The protein is Probable 2-phosphosulfolactate phosphatase of Clostridium perfringens (strain 13 / Type A).